The sequence spans 105 residues: Thioredoxin (105 aa).

Positions 1–105 (MVNNVTDISF…SLLDWINKSI (105 aa)) constitute a Thioredoxin domain. Cys-30 and Cys-33 are disulfide-bonded.

Belongs to the thioredoxin family.

In terms of biological role, component of the thioredoxin-thioredoxin reductase system. Participates in various redox reactions through the reversible oxidation of its active center dithiol to a disulfide and catalyzes dithiol-disulfide exchange reactions. This Rickettsia typhi (strain ATCC VR-144 / Wilmington) protein is Thioredoxin (trxA).